Consider the following 431-residue polypeptide: MQASIESTGNLERRLSFSLPEDRLQSHIVGRLGEIARTTRIKGFRPGKVPAKVIEQRFGAQVRGEALDGLLRETFDAAVREHDLRIVGSPRIDKGDEGEFSFVATVEVVPDFGDIDVSKLTVVRHTAEITDADIDQMIENLQNQRRTWAPVSRGAQDGDLVAVETWSQAGEERLPAEGTEKGSIVLGQGMMFETIEKGLVGLAKGEEKTLDVEFPADWRVPVLAGKTVQVTVKVAEVSEPVVPAVDEAFIKSFGVKGGDVEQFRSDIRANLERELKGALMNRLRREVGEQLIAAYSSVEMPPRLVENEARAMLAQQVEQIRRNGQSVGEIPADAHEGFKEAAAKRVLVGLLVGEVARINDLRLEAKRLNETMRLIASTYEEPEQVIEMYRNDPQLMSGLQNRVMEEQVIDWIAERAQHTEEKLSFQDAIRQ.

In terms of domain architecture, PPIase FKBP-type spans G158–P243.

This sequence belongs to the FKBP-type PPIase family. Tig subfamily.

Its subcellular location is the cytoplasm. The catalysed reaction is [protein]-peptidylproline (omega=180) = [protein]-peptidylproline (omega=0). In terms of biological role, involved in protein export. Acts as a chaperone by maintaining the newly synthesized protein in an open conformation. Functions as a peptidyl-prolyl cis-trans isomerase. This is Trigger factor from Stenotrophomonas maltophilia (strain K279a).